A 404-amino-acid chain; its full sequence is MNSPLPNSYRSGPDDRGHFGLFGGRFVAETLMPLILDLEKAYAEAKIDPAFRAEMDGHLKHYVGRPSPLYFAERLTDHFGGAKIYFKREDLNHTGAHKVNNVLGQIMLARRMGKPRIIAETGAGMHGVATATLCAKFGLKCVVFMGAVDIDRQEPNVLRMKALGAEVRPVTSGAATLKDAMNEALRDWVTNVHDTFYCIGTVAGPHPYPMMVRDFQSVIGHEVREQIMQLEGRLPDSLIACIGGGSNAMGLFHPFLDDPEVAIYGVEAAGHGLSKLHAASIAGGKPGVLHGNRTYLLMDGDGQIQEAHSISAGLDYPGIGPEHAWLHDVGRVNFLSATDTEALDAFKLCCRLEGIIPALEPSHALAKVADLAPKLPKDHLMVLNMSGRGDKDLASVAEHLGGQF.

At Lys98 the chain carries N6-(pyridoxal phosphate)lysine.

Belongs to the TrpB family. In terms of assembly, tetramer of two alpha and two beta chains. Pyridoxal 5'-phosphate serves as cofactor.

It catalyses the reaction (1S,2R)-1-C-(indol-3-yl)glycerol 3-phosphate + L-serine = D-glyceraldehyde 3-phosphate + L-tryptophan + H2O. It functions in the pathway amino-acid biosynthesis; L-tryptophan biosynthesis; L-tryptophan from chorismate: step 5/5. In terms of biological role, the beta subunit is responsible for the synthesis of L-tryptophan from indole and L-serine. The protein is Tryptophan synthase beta chain of Rhodopseudomonas palustris (strain BisA53).